The sequence spans 586 residues: Asparagine synthetase [glutamine-hydrolyzing] (586 aa).

C2 serves as the catalytic For GATase activity. The Glutamine amidotransferase type-2 domain occupies C2–G185. L-glutamine contacts are provided by residues R50–I54, N75–E77, and D98. The Asparagine synthetase domain occupies P194–P517. Residues L232, V268, and S342–G343 contribute to the ATP site.

This sequence belongs to the asparagine synthetase family.

The catalysed reaction is L-aspartate + L-glutamine + ATP + H2O = L-asparagine + L-glutamate + AMP + diphosphate + H(+). The protein operates within amino-acid biosynthesis; L-asparagine biosynthesis; L-asparagine from L-aspartate (L-Gln route): step 1/1. In Brassica oleracea (Wild cabbage), this protein is Asparagine synthetase [glutamine-hydrolyzing].